We begin with the raw amino-acid sequence, 414 residues long: MKATTYAPFAKPLYVMVKPVGAVCNLACEYCYYLEKANLYKENPKHVMSDELLEKFIDEYINSQTMPQVLFTWHGGETLMRPLSFYKKAMELQKKYARGRTIDNCIQTNGTLLTDEWCEFFRENNWLVGVSIDGPQEFHDEYRKNKMGKPSFVKVMQGINLLKKHGVEWNAMAVVNDFNAEYPLDFYNFFKEIDCHYIQFAPIVERIVSHQDGRHLASLAEGKEGALADFSVSPEQWGNFLCTIFDEWVKEDVGKFFIQIFDSTLANWMGEQPGVCTMAKHCGHAGVMEFNGDVYSCDHFVFPEYKLGNIYSQTLVEMMHSERQHNFGTMKYQSLPTQCKECDFLFACNGECPKNRFSRTADGEPGLNYLCKGYYQYFQHVAPYMDFMKKELMNQQAPANIMKALKDGSLKIEY.

Positions 5–250 (TYAPFAKPLY…LCTIFDEWVK (246 aa)) constitute a Radical SAM core domain. [4Fe-4S] cluster-binding residues include C24 and C28. Residue Y30 coordinates S-adenosyl-L-methionine. C31 is a [4Fe-4S] cluster binding site. S-adenosyl-L-methionine is bound by residues G76, S131, and R143. [4Fe-4S] cluster contacts are provided by C276, C282, and C297. The active-site Proton acceptor is the D298. Residues C339, C342, C348, C352, and C371 each coordinate [4Fe-4S] cluster.

It belongs to the radical SAM superfamily. Anaerobic sulfatase-maturating enzyme family. [4Fe-4S] cluster is required as a cofactor.

It carries out the reaction L-seryl-[sulfatase] + S-adenosyl-L-methionine = 3-oxo-L-alanyl-[sulfatase] + 5'-deoxyadenosine + L-methionine + H(+). The protein operates within protein modification; sulfatase oxidation. In terms of biological role, involved in 'Ser-type' sulfatase maturation under anaerobic conditions. Links the heparin and the chondroitin sulfate utilization pathways which contribute to the colonization of the intestinal tract. May catalyze the activation of chondro-6-sulfatase, i.e. the post-translational modification of a specific serine residue into 3-oxoalanine (also known as C(alpha)-formylglycine (FGly)), by a free radical chemical mechanism initiated via the reductive cleavage of S-adenosyl-L-methionine (SAM). Is also able to oxidize a cysteine residue in a synthetic substrate to FGly in vitro, but not in a recombinant Cys-type sulfatase in vivo. But since B.thetaiotaomicron possesses only Ser-type sulfatases, the oxidation of serine residues to FGly is the sole physiological activity. The chain is Serine-type anaerobic sulfatase-maturating enzyme (chuR) from Bacteroides thetaiotaomicron (strain ATCC 29148 / DSM 2079 / JCM 5827 / CCUG 10774 / NCTC 10582 / VPI-5482 / E50).